The sequence spans 314 residues: MSAAEAGGVFHRARGRTLAAFPAEKESEWKGPFYFILGADPQFGLIKAWSTGDCDNGGDEWEQEIRLTEQAVQAINKLNPKPKFFVLCGDLIHAMPGKPWRTEQTEDLKRVLRAVDRAIPLVLVSGNHDIGNTPTAETVEEFCRTWGDDYFSFWVGGVLFLVLNSQFYENPSKCPSLKQAQDQWLDEQLSIARQRHCQHAIVFQHIPLFLESIDEDDDYYFNLSKSTRKKLADKFIHAGVKVVFSGHYHRNAGGTYQNLDMVVSSAIGCQLGRDPHGLRVVVVTAEKIVHRYYSLDELSEKGIEDDLMDLIKKK.

Position 2 is a phosphoserine (S2). Residues 47 to 250 (KAWSTGDCDN…KVVFSGHYHR (204 aa)) are catalytic. A divalent metal cation is bound by residues D53, D90, N127, and H247. S294 carries the phosphoserine modification.

The protein belongs to the metallophosphoesterase superfamily. CPPED1 family. The cofactor is a divalent metal cation. Expressed in subcutaneous adipose tissue.

It is found in the cytoplasm. The enzyme catalyses O-phospho-L-seryl-[protein] + H2O = L-seryl-[protein] + phosphate. The catalysed reaction is O-phospho-L-threonyl-[protein] + H2O = L-threonyl-[protein] + phosphate. Functionally, protein phosphatase that dephosphorylates AKT family kinase specifically at 'Ser-473', blocking cell cycle progression and promoting cell apoptosis. May play an inhibitory role in glucose uptake by adipocytes. This is Serine/threonine-protein phosphatase CPPED1 (CPPED1) from Homo sapiens (Human).